The following is a 288-amino-acid chain: Lipoyl synthase (288 aa).

[4Fe-4S] cluster contacts are provided by Cys39, Cys44, Cys50, Cys65, Cys69, Cys72, and Ser276. Positions 51-265 constitute a Radical SAM core domain; the sequence is WGKGTATFMI…KETGLKKGFE (215 aa).

This sequence belongs to the radical SAM superfamily. Lipoyl synthase family. The cofactor is [4Fe-4S] cluster.

It localises to the cytoplasm. It catalyses the reaction [[Fe-S] cluster scaffold protein carrying a second [4Fe-4S](2+) cluster] + N(6)-octanoyl-L-lysyl-[protein] + 2 oxidized [2Fe-2S]-[ferredoxin] + 2 S-adenosyl-L-methionine + 4 H(+) = [[Fe-S] cluster scaffold protein] + N(6)-[(R)-dihydrolipoyl]-L-lysyl-[protein] + 4 Fe(3+) + 2 hydrogen sulfide + 2 5'-deoxyadenosine + 2 L-methionine + 2 reduced [2Fe-2S]-[ferredoxin]. The protein operates within protein modification; protein lipoylation via endogenous pathway; protein N(6)-(lipoyl)lysine from octanoyl-[acyl-carrier-protein]: step 2/2. Its function is as follows. Catalyzes the radical-mediated insertion of two sulfur atoms into the C-6 and C-8 positions of the octanoyl moiety bound to the lipoyl domains of lipoate-dependent enzymes, thereby converting the octanoylated domains into lipoylated derivatives. The sequence is that of Lipoyl synthase from Bacteroides fragilis (strain YCH46).